A 514-amino-acid chain; its full sequence is ATP synthase subunit alpha (514 aa).

Residue 170–177 (GDRQIGKT) coordinates ATP.

It belongs to the ATPase alpha/beta chains family. As to quaternary structure, F-type ATPases have 2 components, CF(1) - the catalytic core - and CF(0) - the membrane proton channel. CF(1) has five subunits: alpha(3), beta(3), gamma(1), delta(1), epsilon(1). CF(0) has three main subunits: a(1), b(2) and c(9-12). The alpha and beta chains form an alternating ring which encloses part of the gamma chain. CF(1) is attached to CF(0) by a central stalk formed by the gamma and epsilon chains, while a peripheral stalk is formed by the delta and b chains.

It is found in the cell inner membrane. The catalysed reaction is ATP + H2O + 4 H(+)(in) = ADP + phosphate + 5 H(+)(out). In terms of biological role, produces ATP from ADP in the presence of a proton gradient across the membrane. The alpha chain is a regulatory subunit. The chain is ATP synthase subunit alpha from Pseudomonas putida (strain ATCC 700007 / DSM 6899 / JCM 31910 / BCRC 17059 / LMG 24140 / F1).